We begin with the raw amino-acid sequence, 258 residues long: Imidazole glycerol phosphate synthase subunit HisF (258 aa).

Catalysis depends on residues aspartate 11 and aspartate 130.

This sequence belongs to the HisA/HisF family. As to quaternary structure, heterodimer of HisH and HisF.

Its subcellular location is the cytoplasm. It catalyses the reaction 5-[(5-phospho-1-deoxy-D-ribulos-1-ylimino)methylamino]-1-(5-phospho-beta-D-ribosyl)imidazole-4-carboxamide + L-glutamine = D-erythro-1-(imidazol-4-yl)glycerol 3-phosphate + 5-amino-1-(5-phospho-beta-D-ribosyl)imidazole-4-carboxamide + L-glutamate + H(+). The protein operates within amino-acid biosynthesis; L-histidine biosynthesis; L-histidine from 5-phospho-alpha-D-ribose 1-diphosphate: step 5/9. In terms of biological role, IGPS catalyzes the conversion of PRFAR and glutamine to IGP, AICAR and glutamate. The HisF subunit catalyzes the cyclization activity that produces IGP and AICAR from PRFAR using the ammonia provided by the HisH subunit. The sequence is that of Imidazole glycerol phosphate synthase subunit HisF from Lachnoclostridium phytofermentans (strain ATCC 700394 / DSM 18823 / ISDg) (Clostridium phytofermentans).